The sequence spans 166 residues: Large ribosomal subunit protein uL11 (166 aa).

This sequence belongs to the universal ribosomal protein uL11 family.

Its function is as follows. This protein binds directly to 26S ribosomal RNA. The polypeptide is Large ribosomal subunit protein uL11 (RPL12) (Prunus armeniaca (Apricot)).